The sequence spans 100 residues: MARKGLIQRERKRQKLEQKYHLIRRSPKKEIGKVSSLSDKWKIHGKLQSPPRNSAPTRLHRRCFLTGRPRANYRDFGLSGHILREKVHACLLPGATRSSW.

The protein belongs to the universal ribosomal protein uS14 family. In terms of assembly, part of the 30S ribosomal subunit.

It is found in the plastid. It localises to the chloroplast. Its function is as follows. Binds 16S rRNA, required for the assembly of 30S particles. The chain is Small ribosomal subunit protein uS14c from Calycanthus floridus var. glaucus (Eastern sweetshrub).